The sequence spans 76 residues: Defensin-like protein 163 (76 aa).

The signal sequence occupies residues 1-27; it reads MAKLIYSYLFISMFVLSVLLALPNAEG. Disulfide bonds link Cys33–Cys76, Cys43–Cys62, Cys48–Cys70, and Cys52–Cys72.

Belongs to the DEFL family.

It localises to the secreted. The sequence is that of Defensin-like protein 163 (LCR24) from Arabidopsis thaliana (Mouse-ear cress).